Here is a 103-residue protein sequence, read N- to C-terminus: Small ribosomal subunit protein uS10 (103 aa).

The protein belongs to the universal ribosomal protein uS10 family. As to quaternary structure, part of the 30S ribosomal subunit.

In terms of biological role, involved in the binding of tRNA to the ribosomes. This chain is Small ribosomal subunit protein uS10, found in Chlorobaculum parvum (strain DSM 263 / NCIMB 8327) (Chlorobium vibrioforme subsp. thiosulfatophilum).